Here is a 400-residue protein sequence, read N- to C-terminus: Tyrosine--tRNA ligase 2 (400 aa).

Residues 46–55 carry the 'HIGH' region motif; that stretch reads PSAPDIHLGH. Residues 230–234 carry the 'KMSKS' region motif; sequence KMSKS. Residue Lys233 participates in ATP binding. In terms of domain architecture, S4 RNA-binding spans 339-399; sequence NNLIEAIVKI…GKKKIVKLLV (61 aa).

It belongs to the class-I aminoacyl-tRNA synthetase family. TyrS type 2 subfamily. In terms of assembly, homodimer.

The protein resides in the cytoplasm. It carries out the reaction tRNA(Tyr) + L-tyrosine + ATP = L-tyrosyl-tRNA(Tyr) + AMP + diphosphate + H(+). Catalyzes the attachment of tyrosine to tRNA(Tyr) in a two-step reaction: tyrosine is first activated by ATP to form Tyr-AMP and then transferred to the acceptor end of tRNA(Tyr). The polypeptide is Tyrosine--tRNA ligase 2 (Clostridium acetobutylicum (strain ATCC 824 / DSM 792 / JCM 1419 / IAM 19013 / LMG 5710 / NBRC 13948 / NRRL B-527 / VKM B-1787 / 2291 / W)).